The primary structure comprises 177 residues: Ureidoglycolate lyase (177 aa).

The protein belongs to the ureidoglycolate lyase family. Homodimer. Ni(2+) serves as cofactor.

The enzyme catalyses (S)-ureidoglycolate = urea + glyoxylate. Its pathway is nitrogen metabolism; (S)-allantoin degradation. Its function is as follows. Catalyzes the catabolism of the allantoin degradation intermediate (S)-ureidoglycolate, generating urea and glyoxylate. Involved in the utilization of allantoin as nitrogen source. This is Ureidoglycolate lyase from Burkholderia cepacia (Pseudomonas cepacia).